The chain runs to 307 residues: Ribosomal RNA small subunit methyltransferase H (307 aa).

Residues 33–35 (GGY), aspartate 51, phenylalanine 82, aspartate 96, and glutamine 103 contribute to the S-adenosyl-L-methionine site.

The protein belongs to the methyltransferase superfamily. RsmH family.

The protein localises to the cytoplasm. It catalyses the reaction cytidine(1402) in 16S rRNA + S-adenosyl-L-methionine = N(4)-methylcytidine(1402) in 16S rRNA + S-adenosyl-L-homocysteine + H(+). In terms of biological role, specifically methylates the N4 position of cytidine in position 1402 (C1402) of 16S rRNA. This chain is Ribosomal RNA small subunit methyltransferase H, found in Rickettsia peacockii (strain Rustic).